We begin with the raw amino-acid sequence, 252 residues long: Ureidoacrylate amidohydrolase RutB (252 aa).

Positions 1–14 (MSTPARNTTLTSNT) are enriched in polar residues. The interval 1–31 (MSTPARNTTLTSNTPAGAPRLPGAPAPQVLP) is disordered. Residues 15–27 (PAGAPRLPGAPAP) show a composition bias toward low complexity. D50 serves as the catalytic Proton acceptor. K159 is a catalytic residue. The active-site Nucleophile is the C192.

This sequence belongs to the isochorismatase family. RutB subfamily.

It catalyses the reaction (Z)-3-ureidoacrylate + H2O + H(+) = (Z)-3-aminoacrylate + NH4(+) + CO2. It carries out the reaction (Z)-3-ureidoacrylate + H2O = (Z)-3-aminoacrylate + carbamate + H(+). The enzyme catalyses (Z)-2-methylureidoacrylate + H2O + H(+) = (Z)-2-methylaminoacrylate + NH4(+) + CO2. In terms of biological role, hydrolyzes ureidoacrylate to form aminoacrylate and carbamate. The carbamate hydrolyzes spontaneously, thereby releasing one of the nitrogen atoms of the pyrimidine ring as ammonia and one of its carbon atoms as CO2. The sequence is that of Ureidoacrylate amidohydrolase RutB from Variovorax paradoxus (strain S110).